The following is a 186-amino-acid chain: Elongation factor P (186 aa).

This sequence belongs to the elongation factor P family.

The protein resides in the cytoplasm. It participates in protein biosynthesis; polypeptide chain elongation. Functionally, involved in peptide bond synthesis. Stimulates efficient translation and peptide-bond synthesis on native or reconstituted 70S ribosomes in vitro. Probably functions indirectly by altering the affinity of the ribosome for aminoacyl-tRNA, thus increasing their reactivity as acceptors for peptidyl transferase. This Thiobacillus denitrificans (strain ATCC 25259 / T1) protein is Elongation factor P.